A 286-amino-acid chain; its full sequence is DegV domain-containing protein SPs1668 (286 aa).

One can recognise a DegV domain in the interval 3–282 (FTIMTDSTAD…PNTLAVFVIG (280 aa)). Residues T62 and S94 each coordinate hexadecanoate.

In terms of biological role, may bind long-chain fatty acids, such as palmitate, and may play a role in lipid transport or fatty acid metabolism. The protein is DegV domain-containing protein SPs1668 of Streptococcus pyogenes serotype M3 (strain SSI-1).